A 433-amino-acid polypeptide reads, in one-letter code: MAEQVFQNFETLQLHAGYTPDPHTRSTAVPIYATSSYTFNDSAHGARLFGLKELGNIYSRLMNPTVDVFEKRIAALEGGIAAAATSSGQAAQFLTIATLAKAGDNIVASSHLYGGTYNQLNVLFPRFGIKTKFVRSGKLEDYVAAIDDQTRAIYVESMSNPDYVVPDFEGIAKIAHEHGIPLVVDNTLGAGGYYIRPIEHGADIVVHSATKWIGGHGTTIGGVIVDSGRFNWNKHSDRFPEMVEPSPSYHGLKYWEAFGPATFITRIRVEMLRDIGACLSPFSAQQLLLGIETLGLRAERHAQNTEKLAKYFESSPNVSWVLWPGSESHPTYAQAKKYLTRGFGAMLSIGVKGDASAGSKVVDGLKLVSNLANVGDAKSLAIHPWSTTHEQLSEDERLASGVTEDMIRISVGIEHVDDIIADFEQSFQKAYGA.

Lys211 is subject to N6-(pyridoxal phosphate)lysine.

This sequence belongs to the trans-sulfuration enzymes family. Pyridoxal 5'-phosphate is required as a cofactor.

It participates in mycotoxin biosynthesis. Its function is as follows. Sulfhydrylase; part of the gene cluster that mediates the biosynthesis of fusaric acid, a mycotoxin with low to moderate toxicity to animals and humans, but with high phytotoxic properties. L-aspartate is suggested as fusaric acid amino acid precursor that is activated and further processed to O-acetyl-L-homoserine by cluster enzymes aspartate kinase FUB3 and homoserine O-acetyltransferase FUB5, as well as enzymes of the primary metabolism. The polyketide synthase (PKS) FUB1 generates the triketide trans-2-hexenal which is presumptively released by the hydrolase FUB4 and linked to the NRPS-bound amino acid precursor by NAD(P)-dependent dehydrogenase FUB6. FUB1, FUB4, and the non-canonical NRPS Fub8 may form an enzyme complex. Further processing of the NRPS-bound intermediate might be carried out by FUB6 and the O-acetylhomoserine FUB7, enabling a spontaneous electrocyclization to close the carbon backbone of fusaric acid. Dihydrofusaric acid is likely to be released via reduction by the thioester reductase (TR) domain of FUB8 whereupon the final oxidation to fusaric acid may (also) be performed by the FMN-dependent dehydrogenase FUB9. The polypeptide is Sulfhydrylase FUB7 (Gibberella moniliformis (strain M3125 / FGSC 7600) (Maize ear and stalk rot fungus)).